A 711-amino-acid chain; its full sequence is Polyribonucleotide nucleotidyltransferase (711 aa).

Mg(2+) contacts are provided by D486 and D492. Residues 553 to 612 (PRIHTIKISTDKIKDVIGKGGSVIRALTEETGTTIEIEDDGTVKIAATDGEKAKYAIRRI) form the KH domain. In terms of domain architecture, S1 motif spans 622-690 (GRIYNGKVTR…RQGRVRLSIK (69 aa)). Positions 689 to 711 (IKEATEQTQPAAAPEAPTSEQGE) are disordered. Residues 694–711 (EQTQPAAAPEAPTSEQGE) show a composition bias toward low complexity.

The protein belongs to the polyribonucleotide nucleotidyltransferase family. Component of the RNA degradosome, which is a multiprotein complex involved in RNA processing and mRNA degradation. It depends on Mg(2+) as a cofactor.

The protein resides in the cytoplasm. The enzyme catalyses RNA(n+1) + phosphate = RNA(n) + a ribonucleoside 5'-diphosphate. In terms of biological role, involved in mRNA degradation. Catalyzes the phosphorolysis of single-stranded polyribonucleotides processively in the 3'- to 5'-direction. The protein is Polyribonucleotide nucleotidyltransferase of Salmonella arizonae (strain ATCC BAA-731 / CDC346-86 / RSK2980).